A 118-amino-acid chain; its full sequence is Protein TusC (118 aa).

This sequence belongs to the DsrF/TusC family. As to quaternary structure, heterohexamer, formed by a dimer of trimers. The hexameric TusBCD complex contains 2 copies each of TusB, TusC and TusD. The TusBCD complex interacts with TusE.

The protein resides in the cytoplasm. Part of a sulfur-relay system required for 2-thiolation of 5-methylaminomethyl-2-thiouridine (mnm(5)s(2)U) at tRNA wobble positions. In Salmonella paratyphi C (strain RKS4594), this protein is Protein TusC.